Reading from the N-terminus, the 145-residue chain is Antiholin-like protein LrgA (145 aa).

The next 4 membrane-spanning stretches (helical) occupy residues 13-30 (FFHQ…SKII), 40-62 (GSVI…LGEV), 69-91 (LTNN…LGVI), and 95-117 (PFLI…GYVT).

This sequence belongs to the CidA/LrgA family. LrgA subfamily.

It is found in the cell membrane. Its function is as follows. Inhibits the expression or activity of extracellular murein hydrolases by interacting, possibly with LrgB, with the holin-like proteins CidA and/or CidB. The LrgAB and CidAB proteins may affect the proton motive force of the membrane. May be involved in programmed cell death (PCD), possibly triggering PCD in response to antibiotics and environmental stresses. The chain is Antiholin-like protein LrgA from Staphylococcus aureus (strain MW2).